The following is a 489-amino-acid chain: ATP synthase subunit beta 1 (489 aa).

159–166 provides a ligand contact to ATP; that stretch reads GGAGVGKT. Basic and acidic residues predominate over residues 465-477; that stretch reads EKSKKAAEDKPKA. Positions 465–489 are disordered; sequence EKSKKAAEDKPKAEEDEDATSLHDA.

The protein belongs to the ATPase alpha/beta chains family. In terms of assembly, F-type ATPases have 2 components, CF(1) - the catalytic core - and CF(0) - the membrane proton channel. CF(1) has five subunits: alpha(3), beta(3), gamma(1), delta(1), epsilon(1). CF(0) has three main subunits: a(1), b(2) and c(9-12). The alpha and beta chains form an alternating ring which encloses part of the gamma chain. CF(1) is attached to CF(0) by a central stalk formed by the gamma and epsilon chains, while a peripheral stalk is formed by the delta and b chains.

Its subcellular location is the cell inner membrane. The catalysed reaction is ATP + H2O + 4 H(+)(in) = ADP + phosphate + 5 H(+)(out). Functionally, produces ATP from ADP in the presence of a proton gradient across the membrane. The catalytic sites are hosted primarily by the beta subunits. This Marinomonas sp. (strain MWYL1) protein is ATP synthase subunit beta 1.